Reading from the N-terminus, the 764-residue chain is FAST kinase domain-containing protein 5, mitochondrial (764 aa).

Serine 95 carries the post-translational modification Phosphoserine. Position 507 is an N6-acetyllysine (lysine 507). In terms of domain architecture, RAP spans 697–757 (LAIQFTNRNQ…RLEKLAFLHE (61 aa)).

The protein belongs to the FAST kinase family. In terms of assembly, found in a complex with GRSF1, DDX28, DHX30 and FASTKD2. Associates with the 12S mitochondrial rRNA (12S mt-rRNA).

It localises to the mitochondrion matrix. The protein resides in the mitochondrion nucleoid. Plays an important role in the processing of non-canonical mitochondrial mRNA precursors. This Macaca fascicularis (Crab-eating macaque) protein is FAST kinase domain-containing protein 5, mitochondrial (FASTKD5).